The sequence spans 230 residues: MADS-box transcription factor 50 (230 aa).

Residues 1–61 (MVRGKTQMKR…GKLYEFASAS (61 aa)) enclose the MADS-box domain. The K-box domain maps to 86-176 (IEQVKADADG…REKCKNQPPL (91 aa)). Residues 209 to 230 (GLPGRSRSSGGAAEDSQAMPHS) are disordered.

As to expression, expressed in mature leaves and at low levels in roots and young panicles.

The protein localises to the nucleus. Functionally, probable transcription factor active in flowering time control. May control internode elongation and promote floral transition phase. May act upstream of the floral regulators MADS1, MADS14, MADS15 and MADS18 in the floral induction pathway. The polypeptide is MADS-box transcription factor 50 (MADS50) (Oryza sativa subsp. japonica (Rice)).